We begin with the raw amino-acid sequence, 182 residues long: MSLSLLLRGAVRCNAANLVKSARITPLKSYSTLVANVQRKAVVQPLAVAKIVAPVVREISVSAPRMASAGSSHTLLWTVERIVSAGLLAVIPAAFIAPSQVLDALMAISVVIHTHWGVEAMVVDYMRPSVVGNVLPKVAHIALIIISVATLGGLFYFIQNDVGLANGIKRFWAIKGKDAEKA.

Over 1 to 71 the chain is Mitochondrial matrix; that stretch reads MSLSLLLRGA…SAPRMASAGS (71 aa). A helical transmembrane segment spans residues 72 to 96; the sequence is SHTLLWTVERIVSAGLLAVIPAAFI. At 97-101 the chain is on the mitochondrial intermembrane side; it reads APSQV. The helical transmembrane segment at 102 to 122 threads the bilayer; that stretch reads LDALMAISVVIHTHWGVEAMV. Histidine 113 lines the heme pocket. Residues 123–135 lie on the Mitochondrial matrix side of the membrane; that stretch reads VDYMRPSVVGNVL. Tyrosine 125 provides a ligand contact to a ubiquinone. Residues 136–157 form a helical membrane-spanning segment; the sequence is PKVAHIALIIISVATLGGLFYF. Residues 158 to 182 are Mitochondrial intermembrane-facing; that stretch reads IQNDVGLANGIKRFWAIKGKDAEKA.

This sequence belongs to the CybS family. As to quaternary structure, forms part of complex II containing four subunits: a flavoprotein (FP), an iron-sulfur protein (IP) and a cytochrome b composed of a large and a small subunit.

Its subcellular location is the mitochondrion inner membrane. It participates in carbohydrate metabolism; tricarboxylic acid cycle. Functionally, membrane-anchoring subunit of succinate dehydrogenase (SDH) that is involved in complex II of the mitochondrial electron transport chain and is responsible for transferring electrons from succinate to ubiquinone (coenzyme Q). The protein is Succinate dehydrogenase [ubiquinone] cytochrome b small subunit, mitochondrial of Drosophila melanogaster (Fruit fly).